A 558-amino-acid polypeptide reads, in one-letter code: S-layer protein (558 aa).

Residues 1 to 28 (MAMSLKKIGAIAVGGAMVATALASGVAA) form the signal peptide. 7 N-linked (GlcNAc...) asparagine glycosylation sites follow: asparagine 112, asparagine 138, asparagine 158, asparagine 197, asparagine 226, asparagine 291, and asparagine 374.

This sequence belongs to the Mj S-layer protein family.

The protein localises to the secreted. Its subcellular location is the cell wall. It localises to the S-layer. S-layer protein. The S-layer is a paracrystalline mono-layered assembly of proteins which coat the surface of the cell. The chain is S-layer protein (sla) from Methanocaldococcus jannaschii (strain ATCC 43067 / DSM 2661 / JAL-1 / JCM 10045 / NBRC 100440) (Methanococcus jannaschii).